A 121-amino-acid chain; its full sequence is Large ribosomal subunit protein uL22 (121 aa).

The protein belongs to the universal ribosomal protein uL22 family. Part of the 50S ribosomal subunit.

Functionally, this protein binds specifically to 23S rRNA; its binding is stimulated by other ribosomal proteins, e.g. L4, L17, and L20. It is important during the early stages of 50S assembly. It makes multiple contacts with different domains of the 23S rRNA in the assembled 50S subunit and ribosome. The globular domain of the protein is located near the polypeptide exit tunnel on the outside of the subunit, while an extended beta-hairpin is found that lines the wall of the exit tunnel in the center of the 70S ribosome. In Pseudarthrobacter chlorophenolicus (strain ATCC 700700 / DSM 12829 / CIP 107037 / JCM 12360 / KCTC 9906 / NCIMB 13794 / A6) (Arthrobacter chlorophenolicus), this protein is Large ribosomal subunit protein uL22.